Here is a 645-residue protein sequence, read N- to C-terminus: 1,4-alpha-glucan branching enzyme GlgB (645 aa).

Asp309 serves as the catalytic Nucleophile. Glu352 serves as the catalytic Proton donor. The disordered stretch occupies residues 619–645 (VKTRKGSKKQDGSKTKVRSNVTSRGKR). The segment covering 636–645 (RSNVTSRGKR) has biased composition (polar residues).

It belongs to the glycosyl hydrolase 13 family. GlgB subfamily. In terms of assembly, monomer.

The catalysed reaction is Transfers a segment of a (1-&gt;4)-alpha-D-glucan chain to a primary hydroxy group in a similar glucan chain.. The protein operates within glycan biosynthesis; glycogen biosynthesis. Functionally, catalyzes the formation of the alpha-1,6-glucosidic linkages in glycogen by scission of a 1,4-alpha-linked oligosaccharide from growing alpha-1,4-glucan chains and the subsequent attachment of the oligosaccharide to the alpha-1,6 position. This chain is 1,4-alpha-glucan branching enzyme GlgB, found in Bacillus cereus (strain ATCC 14579 / DSM 31 / CCUG 7414 / JCM 2152 / NBRC 15305 / NCIMB 9373 / NCTC 2599 / NRRL B-3711).